The following is a 261-amino-acid chain: Zinc import ATP-binding protein ZnuC (261 aa).

One can recognise an ABC transporter domain in the interval 6–221 (IRLEKVAVRF…PAFVELFGNN (216 aa)). 38-45 (GPNGAGKT) lines the ATP pocket.

It belongs to the ABC transporter superfamily. Zinc importer (TC 3.A.1.15.5) family. As to quaternary structure, the complex is composed of two ATP-binding proteins (ZnuC), two transmembrane proteins (ZnuB) and a solute-binding protein (ZnuA).

The protein localises to the cell inner membrane. It carries out the reaction Zn(2+)(out) + ATP(in) + H2O(in) = Zn(2+)(in) + ADP(in) + phosphate(in) + H(+)(in). In terms of biological role, part of the ABC transporter complex ZnuABC involved in zinc import. Responsible for energy coupling to the transport system. In Pseudomonas fluorescens (strain Pf0-1), this protein is Zinc import ATP-binding protein ZnuC.